The primary structure comprises 194 residues: Fibroblast growth factor 7 (194 aa).

The first 31 residues, 1–31, serve as a signal peptide directing secretion; the sequence is MRKWILTWILPSLLYRSCFHIICLVGTISLA. N-linked (GlcNAc...) asparagine glycosylation occurs at Asn45.

Belongs to the heparin-binding growth factors family. In terms of assembly, interacts with FGFBP1. Interacts with FGFR2. Affinity between fibroblast growth factors (FGFs) and their receptors is increased by heparan sulfate glycosaminoglycans that function as coreceptors.

Functionally, plays an important role in the regulation of embryonic development, cell proliferation and cell differentiation. Required for normal branching morphogenesis. Growth factor active on keratinocytes. Possible major paracrine effector of normal epithelial cell proliferation. This Ovis aries (Sheep) protein is Fibroblast growth factor 7 (FGF7).